The chain runs to 154 residues: Superoxide dismutase [Cu-Zn] (154 aa).

Residues histidine 47, histidine 49, and histidine 64 each contribute to the Cu cation site. Cysteine 58 and cysteine 147 are oxidised to a cystine. Residues histidine 64, histidine 72, histidine 81, and aspartate 84 each coordinate Zn(2+). Residue histidine 121 coordinates Cu cation. Positions 124–137 are enriched in basic and acidic residues; the sequence is TDDLGKGENEESKK. Positions 124–144 are disordered; sequence TDDLGKGENEESKKTGNAGTR. Arginine 144 lines the substrate pocket.

This sequence belongs to the Cu-Zn superoxide dismutase family. In terms of assembly, homodimer. Cu cation serves as cofactor. Requires Zn(2+) as cofactor.

It localises to the cytoplasm. It carries out the reaction 2 superoxide + 2 H(+) = H2O2 + O2. Its function is as follows. Destroys radicals which are normally produced within the cells and which are toxic to biological systems. The polypeptide is Superoxide dismutase [Cu-Zn] (sod1) (Botryotinia fuckeliana (Noble rot fungus)).